The following is a 115-amino-acid chain: Large ribosomal subunit protein bL20c (115 aa).

This sequence belongs to the bacterial ribosomal protein bL20 family.

It is found in the plastid. The protein resides in the chloroplast. Its function is as follows. Binds directly to 23S ribosomal RNA and is necessary for the in vitro assembly process of the 50S ribosomal subunit. It is not involved in the protein synthesizing functions of that subunit. The sequence is that of Large ribosomal subunit protein bL20c from Angiopteris evecta (Mule's foot fern).